The chain runs to 149 residues: Ribonuclease HI (149 aa).

The region spanning 1–142 (MTPKVTIYTD…ADALANEGLR (142 aa)) is the RNase H type-1 domain. 4 residues coordinate Mg(2+): Asp-10, Glu-48, Asp-70, and Asp-134.

The protein belongs to the RNase H family. In terms of assembly, monomer. Mg(2+) serves as cofactor.

It is found in the cytoplasm. The catalysed reaction is Endonucleolytic cleavage to 5'-phosphomonoester.. In terms of biological role, endonuclease that specifically degrades the RNA of RNA-DNA hybrids. This is Ribonuclease HI from Caulobacter vibrioides (strain ATCC 19089 / CIP 103742 / CB 15) (Caulobacter crescentus).